The primary structure comprises 78 residues: ATP synthase subunit a (78 aa).

Residues 34–54 form a helical membrane-spanning segment; sequence LTNIGLYLTIGIFLILTYSLL.

This sequence belongs to the ATPase A chain family. As to quaternary structure, F-type ATPases have 2 components, CF(1) - the catalytic core - and CF(0) - the membrane proton channel. CF(1) has five subunits: alpha(3), beta(3), gamma(1), delta(1), epsilon(1). CF(0) has three main subunits: a, b and c.

It localises to the mitochondrion inner membrane. Mitochondrial membrane ATP synthase (F(1)F(0) ATP synthase or Complex V) produces ATP from ADP in the presence of a proton gradient across the membrane which is generated by electron transport complexes of the respiratory chain. F-type ATPases consist of two structural domains, F(1) - containing the extramembraneous catalytic core and F(0) - containing the membrane proton channel, linked together by a central stalk and a peripheral stalk. During catalysis, ATP synthesis in the catalytic domain of F(1) is coupled via a rotary mechanism of the central stalk subunits to proton translocation. Key component of the proton channel; it may play a direct role in the translocation of protons across the membrane. This is ATP synthase subunit a (atp6) from Aspergillus amstelodami.